The following is a 288-amino-acid chain: Small ribosomal subunit protein uS15m (288 aa).

A mitochondrion-targeting transit peptide spans 1 to 50 (MRLFEGAFQPWKLASTNLMQQCLLLNKKSQFHTTCILQGLKKQKANQRRK).

This sequence belongs to the universal ribosomal protein uS15 family. In terms of assembly, component of the mitochondrial small ribosomal subunit (mt-SSU). Mature yeast 74S mitochondrial ribosomes consist of a small (37S) and a large (54S) subunit. The 37S small subunit contains a 15S ribosomal RNA (15S mt-rRNA) and at least 32 different proteins. The 54S large subunit contains a 21S rRNA (21S mt-rRNA) and at least 45 different proteins.

It localises to the mitochondrion. Functionally, component of the mitochondrial ribosome (mitoribosome), a dedicated translation machinery responsible for the synthesis of mitochondrial genome-encoded proteins, including at least some of the essential transmembrane subunits of the mitochondrial respiratory chain. The mitoribosomes are attached to the mitochondrial inner membrane and translation products are cotranslationally integrated into the membrane. The sequence is that of Small ribosomal subunit protein uS15m (mrps28) from Schizosaccharomyces pombe (strain 972 / ATCC 24843) (Fission yeast).